The chain runs to 483 residues: Regulatory protein ViaA (483 aa).

Belongs to the ViaA family. Homodimer. Interacts with RavA.

Its subcellular location is the cytoplasm. Functionally, component of the RavA-ViaA chaperone complex, which may act on the membrane to optimize the function of some of the respiratory chains. ViaA stimulates the ATPase activity of RavA. This chain is Regulatory protein ViaA, found in Shigella sonnei (strain Ss046).